The primary structure comprises 482 residues: Long chain base biosynthesis protein 1c (482 aa).

A helical membrane pass occupies residues 33 to 53 (FGIHIDGHLVVEGLLIAAILF).

This sequence belongs to the class-II pyridoxal-phosphate-dependent aminotransferase family. Heterodimer with LCB2. Component of the serine palmitoyltransferase (SPT) complex, composed of LCB1 and LCB2. It depends on pyridoxal 5'-phosphate as a cofactor.

Its subcellular location is the endoplasmic reticulum membrane. The enzyme catalyses L-serine + hexadecanoyl-CoA + H(+) = 3-oxosphinganine + CO2 + CoA. Its pathway is lipid metabolism; sphingolipid metabolism. Functionally, serine palmitoyltransferase (SPT). The heterodimer formed with LCB2 constitutes the catalytic core. The polypeptide is Long chain base biosynthesis protein 1c (Oryza sativa subsp. japonica (Rice)).